A 908-amino-acid chain; its full sequence is Protein translocase subunit SecA (908 aa).

ATP contacts are provided by residues glutamine 87, 105–109 (GEGKT), and aspartate 512. Residues 860–908 (AESLVGSSDEHEAVTAQAPMIRDGEKVGRNDPCPCGSGRKYKQCHGKLS) form a disordered region. Residues cysteine 892, cysteine 894, cysteine 903, and histidine 904 each contribute to the Zn(2+) site. The segment covering 898 to 908 (RKYKQCHGKLS) has biased composition (basic residues).

Belongs to the SecA family. Monomer and homodimer. Part of the essential Sec protein translocation apparatus which comprises SecA, SecYEG and auxiliary proteins SecDF-YajC and YidC. Zn(2+) is required as a cofactor.

The protein resides in the cell inner membrane. It localises to the cytoplasm. It catalyses the reaction ATP + H2O + cellular proteinSide 1 = ADP + phosphate + cellular proteinSide 2.. Part of the Sec protein translocase complex. Interacts with the SecYEG preprotein conducting channel. Has a central role in coupling the hydrolysis of ATP to the transfer of proteins into and across the cell membrane, serving both as a receptor for the preprotein-SecB complex and as an ATP-driven molecular motor driving the stepwise translocation of polypeptide chains across the membrane. This chain is Protein translocase subunit SecA, found in Shewanella baltica (strain OS155 / ATCC BAA-1091).